The primary structure comprises 732 residues: Acylamino-acid-releasing enzyme (732 aa).

A Blocked amino end (Met); alternate modification is found at M1. The residue at position 1 (M1) is an N-acetylmethionine; alternate. Residues S185 and S187 each carry the phosphoserine modification. Catalysis depends on charge relay system residues S587, D675, and H707.

Belongs to the peptidase S9C family. In terms of assembly, homotetramer.

The protein resides in the cytoplasm. The catalysed reaction is Cleavage of an N-acetyl or N-formyl amino acid from the N-terminus of a polypeptide.. Homotetramerization is required for activity. Tetramerization results in the formation of a gated channel which is involved in substrate selection and substrate access to the catalytic sites. Functionally, this enzyme catalyzes the hydrolysis of the N-terminal peptide bond of an N-acetylated peptide to generate an N-acetylated amino acid and a peptide with a free N-terminus. It preferentially cleaves off Ac-Ala, Ac-Met and Ac-Ser. Also, involved in the degradation of oxidized and glycated proteins. In Rattus norvegicus (Rat), this protein is Acylamino-acid-releasing enzyme (Apeh).